The chain runs to 7260 residues: Nonribosomal peptide synthetase ecdA (7260 aa).

The Carrier 1 domain occupies 4–80; that stretch reads TNEMERKRVF…ELFETIQYLQ (77 aa). Serine 41 bears the O-(pantetheine 4'-phosphoryl)serine mark. The interval 134–549 is condensation 1; the sequence is EDVYPSTPLQ…SINEILTLPA (416 aa). An adenylation 1 region spans residues 575 to 965; the sequence is QDQVRSQPAA…DGSLLYVGRC (391 aa). Residues 1090–1166 form the Carrier 2 domain; it reads APSTAIEHKL…DLARELEGRN (77 aa). Serine 1127 carries the post-translational modification O-(pantetheine 4'-phosphoryl)serine. Residues 1208 to 1628 form a condensation 2 region; sequence EDIIPCTAMQ…LGDLSLLSAD (421 aa). An adenylation 2 region spans residues 1653–2054; that stretch reads EEQITARPDS…GRRDTQIKIR (402 aa). A Carrier 3 domain is found at 2188–2264; sequence TPSTPTESQL…DLANLLSSRF (77 aa). O-(pantetheine 4'-phosphoryl)serine is present on serine 2225. The tract at residues 2314-2719 is condensation 3; the sequence is QDVYPCTPLQ…THVVQQLCDP (406 aa). Positions 2763 to 3156 are adenylation 3; sequence KQALAQPNAP…GRRDTQVKIR (394 aa). One can recognise a Carrier 4 domain in the interval 3287 to 3365; that stretch reads QPATEMEKML…ELAQVLEERV (79 aa). Serine 3324 is subject to O-(pantetheine 4'-phosphoryl)serine. Residues 3417-3831 are condensation 4; it reads VQDVYPCTPL…LLSPNDQQQI (415 aa). Positions 3851-4248 are adenylation 4; it reads EEQAMAHPTK…SFVYVARRNT (398 aa). The Carrier 5 domain maps to 4394 to 4471; the sequence is APATAMERTL…DLANLLADGA (78 aa). Position 4431 is an O-(pantetheine 4'-phosphoryl)serine (serine 4431). The interval 4510–4910 is condensation 5; the sequence is EDIYPATPLQ…HFVHVAEQLF (401 aa). Residues 4955-5357 form an adenylation 5 region; the sequence is ERAALQPNAP…GRRDLQVKIR (403 aa). The Carrier 6 domain occupies 5496–5573; it reads APRTVMEQQV…DLALVLSERG (78 aa). Serine 5533 is modified (O-(pantetheine 4'-phosphoryl)serine). The condensation 6 stretch occupies residues 5622-6043; it reads EDVYPCTPLQ…AVSEKDERQI (422 aa). Residues 6063–6460 form an adenylation 6 region; that stretch reads QEQVARTPGE…GRHDSQVKIR (398 aa). Positions 6592–6668 constitute a Carrier 7 domain; sequence APSTAMERQL…EVAQVVEDRV (77 aa). Serine 6629 is modified (O-(pantetheine 4'-phosphoryl)serine). The segment at 6718 to 7133 is condensation 7; it reads LPTTDFQALT…ILDSPGLLVS (416 aa). Residues 7241 to 7260 are disordered; that stretch reads CEEAEKSASVTSSERRLATI.

This sequence belongs to the NRP synthetase family.

It functions in the pathway antifungal biosynthesis. In terms of biological role, nonribosomal peptide synthetase; part of the gene cluster that mediates the biosynthesis of echinocandin B, a fungal lipidated cyclic hexapeptide that acts as an antifungal agent. Linoleoyl-AMP, produced by the fatty-acyl-AMP ligase ecdI, is transferred to the initiation carrier domain (T0) of ecdA. The linoleoyl-S-phosphopantetheinyl-T0 is sequentially extended with L-ornithine, L-threonine, L-proline, L-homotyrosine, L-threonine, and 4R-methyl-L-proline to form the linear hexapeptide. Thereafter, the terminal condensation (C7) performs macrocyclization of the NRPS product and the cyclic scaffold is released from ecdA. All six of the amino acid residues are hydroxylated, including 4R,5R-dihydroxy-L-ornithine, 4R-hydroxyl-L-proline, 3S,4S-dihydroxy-L-homotyrosine, and 3S-hydroxyl-4S-methyl-L-prolin. In the pathway, all the hydroxylation reactions are proposed to occur following completion of the cyclic peptide, so the unhydroxylated precursor produced by ecdA will undergo six rounds of hydroxylation. Five hydroxylase genes (ecdG, ecdH, ecdK, htyE and htyF) are embedded within the echinocandin B (ecd) and L-homotyrosine (hty) clusters. The chain is Nonribosomal peptide synthetase ecdA from Aspergillus rugulosus (Emericella rugulosa).